A 115-amino-acid chain; its full sequence is Methylmalonyl-CoA decarboxylase subunit delta (115 aa).

A helical transmembrane segment spans residues 11–31; it reads WLIMAINMTVVFAVLIALGIL. Residues 46 to 70 form a disordered region; sequence EAPAATAPVATPTATPVAPANASAQ. Residues 48–65 show a composition bias toward low complexity; that stretch reads PAATAPVATPTATPVAPA.

This sequence belongs to the OadG family. As to quaternary structure, the methylmalonyl-CoA decarboxylase is composed of five subunits: the carboxyltransferase alpha subunit (MmdA), the tunnel beta subunit (MmdB), the biotin-containing gamma subunit (MmdC), and the delta (MmdD) and epsilon (MmdE) subunits. Post-translationally, the N-terminus is blocked.

The protein resides in the cell membrane. The enzyme catalyses (S)-methylmalonyl-CoA + Na(+)(in) + H(+)(out) = propanoyl-CoA + Na(+)(out) + CO2. Completely inhibited by avidin. Its function is as follows. Subunit of the sodium ion pump methylmalonyl-CoA decarboxylase, which converts the chemical energy of a decarboxylation reaction into an electrochemical gradient of Na(+) ions across the cytoplasmic membrane, thereby creating a sodium ion motive force that is used for ATP synthesis. The delta subunit is required for catalytic activity as well as for the proper assembly of the individual subunits to an enzyme complex. Can also convert malonyl-CoA into acetyl-CoA. In Veillonella parvula (Staphylococcus parvulus), this protein is Methylmalonyl-CoA decarboxylase subunit delta.